A 392-amino-acid chain; its full sequence is 2-oxoisovalerate dehydrogenase subunit beta, mitochondrial (392 aa).

A mitochondrion-targeting transit peptide spans 1 to 50 (MAVVAAAAGWLLRLRAAGAEGHWRRLPGAGLARGFLHPAATVEDAAQRRQ). Tyr152 contributes to the thiamine diphosphate binding site. Residues Gly178, Leu180, Thr181, Cys228, and Asp231 each coordinate K(+). At Lys232 the chain carries N6-acetyllysine. K(+) is bound at residue Asn233. An N6-acetyllysine modification is found at Lys241.

In terms of assembly, heterotetramer of 2 alpha/BCKDHA and 2 beta chains/BCKDHB that forms the branched-chain alpha-keto acid decarboxylase (E1) component of the BCKD complex. The branched-chain alpha-ketoacid dehydrogenase is a large complex composed of three major building blocks E1, E2 and E3. It is organized around E2, a 24-meric cubic core composed of DBT, to which are associated 6 to 12 copies of E1, and approximately 6 copies of the dehydrogenase E3, a DLD dimer. Thiamine diphosphate is required as a cofactor.

Its subcellular location is the mitochondrion matrix. The catalysed reaction is N(6)-[(R)-lipoyl]-L-lysyl-[protein] + 3-methyl-2-oxobutanoate + H(+) = N(6)-[(R)-S(8)-2-methylpropanoyldihydrolipoyl]-L-lysyl-[protein] + CO2. Together with BCKDHA forms the heterotetrameric E1 subunit of the mitochondrial branched-chain alpha-ketoacid dehydrogenase (BCKD) complex. The BCKD complex catalyzes the multi-step oxidative decarboxylation of alpha-ketoacids derived from the branched-chain amino-acids valine, leucine and isoleucine producing CO2 and acyl-CoA which is subsequently utilized to produce energy. The E1 subunit catalyzes the first step with the decarboxylation of the alpha-ketoacid forming an enzyme-product intermediate. A reductive acylation mediated by the lipoylamide cofactor of E2 extracts the acyl group from the E1 active site for the next step of the reaction. The protein is 2-oxoisovalerate dehydrogenase subunit beta, mitochondrial of Homo sapiens (Human).